Reading from the N-terminus, the 127-residue chain is DNA-directed RNA polymerase subunit omega (127 aa).

Belongs to the RNA polymerase subunit omega family. The RNAP catalytic core consists of 2 alpha, 1 beta, 1 beta' and 1 omega subunit. When a sigma factor is associated with the core the holoenzyme is formed, which can initiate transcription.

The catalysed reaction is RNA(n) + a ribonucleoside 5'-triphosphate = RNA(n+1) + diphosphate. Promotes RNA polymerase assembly. Latches the N- and C-terminal regions of the beta' subunit thereby facilitating its interaction with the beta and alpha subunits. The polypeptide is DNA-directed RNA polymerase subunit omega (Rickettsia peacockii (strain Rustic)).